We begin with the raw amino-acid sequence, 310 residues long: Translocator protein BipD (310 aa).

2 coiled-coil regions span residues 127-171 (DPIL…LQDY) and 250-299 (DTAR…AIST).

It belongs to the invasin protein D family.

The protein resides in the secreted. In terms of biological role, required for invasion of epithelial cells, as well as for survival within host cells, escape from endocytic vesicles and subsequent actin-tail formation. Probably regulates the secretion of effectors BipB and BipC and their final integration into the target cell membrane. In Burkholderia thailandensis (strain ATCC 700388 / DSM 13276 / CCUG 48851 / CIP 106301 / E264), this protein is Translocator protein BipD (bipD).